The primary structure comprises 98 residues: Acylphosphatase (98 aa).

The Acylphosphatase-like domain occupies 12 to 98; sequence TYYVRVRGVV…ERRFERFQQQ (87 aa). Residues R27 and N45 contribute to the active site.

Belongs to the acylphosphatase family.

It carries out the reaction an acyl phosphate + H2O = a carboxylate + phosphate + H(+). The polypeptide is Acylphosphatase (acyP) (Burkholderia lata (strain ATCC 17760 / DSM 23089 / LMG 22485 / NCIMB 9086 / R18194 / 383)).